Consider the following 458-residue polypeptide: ATP synthase subunit beta (458 aa).

Residue 148 to 155 (GGAGVGKT) participates in ATP binding.

Belongs to the ATPase alpha/beta chains family. F-type ATPases have 2 components, CF(1) - the catalytic core - and CF(0) - the membrane proton channel. CF(1) has five subunits: alpha(3), beta(3), gamma(1), delta(1), epsilon(1). CF(0) has three main subunits: a(1), b(2) and c(9-12). The alpha and beta chains form an alternating ring which encloses part of the gamma chain. CF(1) is attached to CF(0) by a central stalk formed by the gamma and epsilon chains, while a peripheral stalk is formed by the delta and b chains.

The protein localises to the cell inner membrane. It carries out the reaction ATP + H2O + 4 H(+)(in) = ADP + phosphate + 5 H(+)(out). Produces ATP from ADP in the presence of a proton gradient across the membrane. The catalytic sites are hosted primarily by the beta subunits. The polypeptide is ATP synthase subunit beta (Pseudomonas fluorescens (strain ATCC BAA-477 / NRRL B-23932 / Pf-5)).